The sequence spans 184 residues: ATP synthase subunit b, chloroplastic (184 aa).

A helical transmembrane segment spans residues 27–49 (LATNPINLSVVLGVLIFFGKGVL).

Belongs to the ATPase B chain family. F-type ATPases have 2 components, F(1) - the catalytic core - and F(0) - the membrane proton channel. F(1) has five subunits: alpha(3), beta(3), gamma(1), delta(1), epsilon(1). F(0) has four main subunits: a(1), b(1), b'(1) and c(10-14). The alpha and beta chains form an alternating ring which encloses part of the gamma chain. F(1) is attached to F(0) by a central stalk formed by the gamma and epsilon chains, while a peripheral stalk is formed by the delta, b and b' chains.

Its subcellular location is the plastid. It localises to the chloroplast thylakoid membrane. F(1)F(0) ATP synthase produces ATP from ADP in the presence of a proton or sodium gradient. F-type ATPases consist of two structural domains, F(1) containing the extramembraneous catalytic core and F(0) containing the membrane proton channel, linked together by a central stalk and a peripheral stalk. During catalysis, ATP synthesis in the catalytic domain of F(1) is coupled via a rotary mechanism of the central stalk subunits to proton translocation. In terms of biological role, component of the F(0) channel, it forms part of the peripheral stalk, linking F(1) to F(0). The chain is ATP synthase subunit b, chloroplastic from Citrus sinensis (Sweet orange).